Reading from the N-terminus, the 278-residue chain is Cytidine kinase (278 aa).

203-208 is a binding site for ATP; it reads TRGEKG. Catalysis depends on Asp-237, which acts as the Proton acceptor.

This sequence belongs to the carbohydrate kinase PfkB family. It depends on Mg(2+) as a cofactor.

It catalyses the reaction cytidine + ATP = CMP + ADP + H(+). Functionally, involved in nucleoside degradation. Phosphorylates cytidine to CMP. Can also act on deoxycytidine and uridine, but is most active with cytidine. ATP is the most preferred phosphate donor, but it can also use GTP, CTP or UTP. This chain is Cytidine kinase, found in Thermococcus kodakarensis (strain ATCC BAA-918 / JCM 12380 / KOD1) (Pyrococcus kodakaraensis (strain KOD1)).